A 387-amino-acid polypeptide reads, in one-letter code: 23S rRNA (uracil(747)-C(5))-methyltransferase RlmC (387 aa).

The [4Fe-4S] cluster site is built by Cys3, Cys11, Cys14, and Cys86. Residues Gln211, Phe240, Glu269, and Asn319 each coordinate S-adenosyl-L-methionine. Cys346 serves as the catalytic Nucleophile.

It belongs to the class I-like SAM-binding methyltransferase superfamily. RNA M5U methyltransferase family. RlmC subfamily.

The enzyme catalyses uridine(747) in 23S rRNA + S-adenosyl-L-methionine = 5-methyluridine(747) in 23S rRNA + S-adenosyl-L-homocysteine + H(+). Its function is as follows. Catalyzes the formation of 5-methyl-uridine at position 747 (m5U747) in 23S rRNA. This Pasteurella multocida (strain Pm70) protein is 23S rRNA (uracil(747)-C(5))-methyltransferase RlmC.